A 209-amino-acid chain; its full sequence is Large ribosomal subunit protein uL3 (209 aa).

Residues 122–152 (AIKRHGQSRGPMSHGSRYHRRPGSMGPVDPN) form a disordered region.

It belongs to the universal ribosomal protein uL3 family. Part of the 50S ribosomal subunit. Forms a cluster with proteins L14 and L19. Interacts with RNA helicase CshA.

Its function is as follows. One of the primary rRNA binding proteins, it binds directly near the 3'-end of the 23S rRNA, where it nucleates assembly of the 50S subunit. Strongly stimulates 23S rRNA precursor processing by mini-ribonuclease 3 (MrnC); 20-30% DMSO can replace L3, suggesting the protein may alter rRNA conformation. The chain is Large ribosomal subunit protein uL3 from Bacillus subtilis (strain 168).